The primary structure comprises 422 residues: Serine--tRNA ligase (422 aa).

L-serine is bound at residue 230-232 (TAE). Residue 261 to 263 (RAE) coordinates ATP. L-serine is bound at residue E284. 348–351 (EISS) is an ATP binding site. Residue S383 participates in L-serine binding.

This sequence belongs to the class-II aminoacyl-tRNA synthetase family. Type-1 seryl-tRNA synthetase subfamily. As to quaternary structure, homodimer. The tRNA molecule binds across the dimer.

It is found in the cytoplasm. It catalyses the reaction tRNA(Ser) + L-serine + ATP = L-seryl-tRNA(Ser) + AMP + diphosphate + H(+). It carries out the reaction tRNA(Sec) + L-serine + ATP = L-seryl-tRNA(Sec) + AMP + diphosphate + H(+). The protein operates within aminoacyl-tRNA biosynthesis; selenocysteinyl-tRNA(Sec) biosynthesis; L-seryl-tRNA(Sec) from L-serine and tRNA(Sec): step 1/1. Catalyzes the attachment of serine to tRNA(Ser). Is also able to aminoacylate tRNA(Sec) with serine, to form the misacylated tRNA L-seryl-tRNA(Sec), which will be further converted into selenocysteinyl-tRNA(Sec). This chain is Serine--tRNA ligase, found in Pelotomaculum thermopropionicum (strain DSM 13744 / JCM 10971 / SI).